A 203-amino-acid polypeptide reads, in one-letter code: Urease accessory protein UreG (203 aa).

A GTP-binding site is contributed by 11 to 18 (GPVGSGKT).

The protein belongs to the SIMIBI class G3E GTPase family. UreG subfamily. In terms of assembly, homodimer. UreD, UreF and UreG form a complex that acts as a GTP-hydrolysis-dependent molecular chaperone, activating the urease apoprotein by helping to assemble the nickel containing metallocenter of UreC. The UreE protein probably delivers the nickel.

It is found in the cytoplasm. Functionally, facilitates the functional incorporation of the urease nickel metallocenter. This process requires GTP hydrolysis, probably effectuated by UreG. The sequence is that of Urease accessory protein UreG from Prochlorococcus marinus (strain MIT 9312).